Consider the following 366-residue polypeptide: Phosphate acyltransferase (366 aa).

Residues 334–366 (ESAKNKETQSKQASTKNTAPKTSETTKESQQSL) are disordered. Residues 343-366 (SKQASTKNTAPKTSETTKESQQSL) show a composition bias toward polar residues.

The protein belongs to the PlsX family. As to quaternary structure, homodimer. Probably interacts with PlsY.

The protein resides in the cytoplasm. The enzyme catalyses a fatty acyl-[ACP] + phosphate = an acyl phosphate + holo-[ACP]. It functions in the pathway lipid metabolism; phospholipid metabolism. Its function is as follows. Catalyzes the reversible formation of acyl-phosphate (acyl-PO(4)) from acyl-[acyl-carrier-protein] (acyl-ACP). This enzyme utilizes acyl-ACP as fatty acyl donor, but not acyl-CoA. The chain is Phosphate acyltransferase from Onion yellows phytoplasma (strain OY-M).